The primary structure comprises 374 residues: Peptide chain release factor 2 (374 aa).

Position 249 is an N5-methylglutamine (Q249).

This sequence belongs to the prokaryotic/mitochondrial release factor family. Post-translationally, methylated by PrmC. Methylation increases the termination efficiency of RF2.

Its subcellular location is the cytoplasm. Its function is as follows. Peptide chain release factor 2 directs the termination of translation in response to the peptide chain termination codons UGA and UAA. This chain is Peptide chain release factor 2, found in Ruegeria sp. (strain TM1040) (Silicibacter sp.).